We begin with the raw amino-acid sequence, 287 residues long: tRNA pseudouridine synthase B (287 aa).

Asp38 acts as the Nucleophile in catalysis.

Belongs to the pseudouridine synthase TruB family. Type 1 subfamily.

It carries out the reaction uridine(55) in tRNA = pseudouridine(55) in tRNA. Functionally, responsible for synthesis of pseudouridine from uracil-55 in the psi GC loop of transfer RNAs. In Mycoplasma mobile (strain ATCC 43663 / 163K / NCTC 11711) (Mesomycoplasma mobile), this protein is tRNA pseudouridine synthase B.